The sequence spans 466 residues: Reticulophagy regulator 3 (466 aa).

The segment at Met1–Ser28 is disordered. Ala2 carries the N-acetylalanine modification. Topologically, residues Ala2–Trp80 are cytoplasmic. At Thr10 the chain carries Phosphothreonine. Phosphoserine is present on Ser26. Residues Phe81–Val101 traverse the membrane as a helical segment. At Cys102 to Lys163 the chain is on the lumenal side. Residues Gln164–Gly184 form a helical membrane-spanning segment. At Arg185–Tyr186 the chain is on the cytoplasmic side. Residues Val187–Val207 traverse the membrane as a helical segment. Residues Tyr208–Glu381 are Lumenal-facing. 2 positions are modified to phosphoserine: Ser258 and Ser260. Thr283 carries the phosphothreonine modification. The segment at Asp284 to Arg374 is disordered. Phosphoserine is present on residues Ser285, Ser288, Ser293, and Ser303. The span at Cys294–Thr310 shows a compositional bias: polar residues. Residues Thr307 and Thr310 each carry the phosphothreonine modification. Residues Ser313, Ser320, and Ser360 each carry the phosphoserine modification. Positions Leu316–Pro331 are enriched in basic and acidic residues. The helical transmembrane segment at Leu382–Ser402 threads the bilayer. At Gln403–His466 the chain is on the cytoplasmic side. Residues Gly412–His466 are disordered. The span at Leu438 to Asp451 shows a compositional bias: acidic residues. Thr440 carries the phosphothreonine modification. The LIR motif signature appears at Asp445–Leu450. The span at Ser453–His466 shows a compositional bias: polar residues.

It belongs to the RETREG family. Interacts with ATG8 family modifier proteins MAP1LC3A, MAP1LC3B, MAP1LC3C, GABARAP, GABARAPL1 and GABARAPL2. Interacts with CANX. Interacts with RTN4 isoform B.

Its subcellular location is the endoplasmic reticulum membrane. In terms of biological role, endoplasmic reticulum (ER)-anchored autophagy regulator which exists in an inactive state under basal conditions but is activated following cellular stress. When activated, induces ER fragmentation and mediates ER delivery into lysosomes through sequestration into autophagosomes via interaction with ATG8 family proteins. Promotes ER membrane curvature and ER tubulation required for subsequent ER fragmentation and engulfment into autophagosomes. Required for collagen quality control in a LIR motif-dependent manner. Mediates NRF1-enhanced neurite outgrowth. This Homo sapiens (Human) protein is Reticulophagy regulator 3.